The following is a 375-amino-acid chain: 23S rRNA (uracil(747)-C(5))-methyltransferase RlmC (375 aa).

Positions 3, 11, 14, and 87 each coordinate [4Fe-4S] cluster. S-adenosyl-L-methionine is bound by residues Q212, F241, E262, and N307. The active-site Nucleophile is C334.

It belongs to the class I-like SAM-binding methyltransferase superfamily. RNA M5U methyltransferase family. RlmC subfamily.

It carries out the reaction uridine(747) in 23S rRNA + S-adenosyl-L-methionine = 5-methyluridine(747) in 23S rRNA + S-adenosyl-L-homocysteine + H(+). Catalyzes the formation of 5-methyl-uridine at position 747 (m5U747) in 23S rRNA. This Shigella dysenteriae serotype 1 (strain Sd197) protein is 23S rRNA (uracil(747)-C(5))-methyltransferase RlmC.